The sequence spans 509 residues: Maturase K (509 aa).

The protein belongs to the intron maturase 2 family. MatK subfamily.

It localises to the plastid. The protein resides in the chloroplast. Its function is as follows. Usually encoded in the trnK tRNA gene intron. Probably assists in splicing its own and other chloroplast group II introns. This chain is Maturase K, found in Anthocercis angustifolia (Narrow-leaf ray-flower).